A 330-amino-acid chain; its full sequence is Copper-containing nitrite reductase (330 aa).

2 Plastocyanin-like domains span residues 1 to 165 (GLPR…YDRV) and 166 to 330 (YTIG…PGPA). H85, H90, H125, C126, H135, M140, and H296 together coordinate Cu cation.

The protein belongs to the multicopper oxidase family. As to quaternary structure, homotrimer. It depends on Cu(2+) as a cofactor. Cu(+) serves as cofactor. The cofactor is FAD.

It is found in the periplasm. The enzyme catalyses nitric oxide + Fe(III)-[cytochrome c] + H2O = Fe(II)-[cytochrome c] + nitrite + 2 H(+). It functions in the pathway nitrogen metabolism; nitrate reduction (denitrification); dinitrogen from nitrate: step 2/4. The chain is Copper-containing nitrite reductase (nirK) from Alcaligenes xylosoxydans xylosoxydans (Achromobacter xylosoxidans).